We begin with the raw amino-acid sequence, 481 residues long: tRNA:m(4)X modification enzyme TRM13 homolog (481 aa).

Ala-2 bears the N-acetylalanine mark. The CHHC U11-48K-type zinc-finger motif lies at 56 to 83; sequence RILCPLDPKHTVYEDQLAKHLKKCNSRE. Zn(2+)-binding residues include Cys-59, His-65, His-75, and Cys-79. Positions 113 to 140 form a coiled coil; sequence SLSEEQLEKLIKKLRKASEGLNSTLKDH. A disordered region spans residues 381–408; the sequence is ETSNSTTKRQDNQNDDSEEHDDGGYRIT.

Belongs to the methyltransferase TRM13 family.

The catalysed reaction is cytidine(4) in tRNA(Pro) + S-adenosyl-L-methionine = 2'-O-methylcytidine(4) in tRNA(Pro) + S-adenosyl-L-homocysteine + H(+). It carries out the reaction cytidine(4) in tRNA(Gly)(GCC) + S-adenosyl-L-methionine = 2'-O-methylcytidine(4) in tRNA(Gly)(GCC) + S-adenosyl-L-homocysteine + H(+). It catalyses the reaction adenosine(4) in tRNA(His) + S-adenosyl-L-methionine = 2'-O-methyladenosine(4) in tRNA(His) + S-adenosyl-L-homocysteine + H(+). TRNA methylase which 2'-O-methylates cytidine(4) in tRNA(Pro) and tRNA(Gly)(GCC), and adenosine(4) in tRNA(His). The sequence is that of tRNA:m(4)X modification enzyme TRM13 homolog (TRMT13) from Homo sapiens (Human).